A 329-amino-acid chain; its full sequence is Serpentine receptor class alpha-6 (329 aa).

7 helical membrane-spanning segments follow: residues 26–46 (VDLL…KIVI), 68–88 (LYQI…FFML), 104–124 (YFKV…GLLI), 143–163 (IGVC…FIIL), 187–207 (NLFS…SIFI), 238–258 (ICFL…GILI), and 273–293 (FWIA…VLLI).

Belongs to the nematode receptor-like protein sra family.

The protein localises to the membrane. The chain is Serpentine receptor class alpha-6 (sra-6) from Caenorhabditis elegans.